The primary structure comprises 521 residues: MDNDSQYSGYSYKSGHSRSSRKHRDRRERHRSKSREGSRGDKSVTIQAPGEPLLDNESTRGEDRDDNWGETTTVVTGTSEHSISHDDITRITKDMEDSAKLDCSRHLGVVIGGALALLSFLTPIAFMLLPQILWREDLEQCGTACEGLFISVAFKLLILLLGSWALFFRRPKAFFPRVFVFRALLMVLVFLLVVSYWLFYGVRILESRDKNYQGIVQYAVSLVDALLFVHYLAVVLLELRQLQPQFTVKVVRSTDGASRFYNIGHLSIQRVAVWILENYYHDFPVYNPALLNLPKSILSKKMSGFKVYSLGEENTTNNSTGQSRAVIAAAARRRDNSHNEYYYEEAEHERRVRKRKARLVVAVEEAFTHIKRLQDEDQKNPREIMDPREAAQAIFASMARAMQKYLRTTKQQPYHTMESILHHLEFCITHDMTPKAFLERYLGPGPTIQYHKDRWLAKQWTLVSEEPVTNGLKDGVVFVLKRQDFSLVVSTKKIPFFKLSEEFVDPKSHKFVMRLQSETSV.

Residues 1–81 (MDNDSQYSGY…TTVVTGTSEH (81 aa)) are disordered. Topologically, residues 1-108 (MDNDSQYSGY…AKLDCSRHLG (108 aa)) are cytoplasmic. Positions 15–33 (GHSRSSRKHRDRRERHRSK) are enriched in basic residues. The span at 57–67 (ESTRGEDRDDN) shows a compositional bias: basic and acidic residues. Over residues 69–81 (GETTTVVTGTSEH) the composition is skewed to low complexity. Residues 109-129 (VVIGGALALLSFLTPIAFMLL) form a helical membrane-spanning segment. The Extracellular portion of the chain corresponds to 130-147 (PQILWREDLEQCGTACEG). A helical transmembrane segment spans residues 148-168 (LFISVAFKLLILLLGSWALFF). Over 169 to 178 (RRPKAFFPRV) the chain is Cytoplasmic. Residues 179 to 199 (FVFRALLMVLVFLLVVSYWLF) traverse the membrane as a helical segment. Over 200–218 (YGVRILESRDKNYQGIVQY) the chain is Extracellular. The helical transmembrane segment at 219 to 239 (AVSLVDALLFVHYLAVVLLEL) threads the bilayer. The Cytoplasmic portion of the chain corresponds to 240-521 (RQLQPQFTVK…VMRLQSETSV (282 aa)). A PDZ-binding motif is present at residues 518–521 (ETSV).

The protein belongs to the Vang family. In terms of assembly, interacts with dvl/dsh. Interacts with prickle3.

The protein localises to the cell membrane. Functionally, has a role in non-canonical Wnt/planar cell polarity (PCP) signaling; can recruit dvl/dsh and prickle from the cytoplasm to the plasma membrane. Acts in a PCP complex to regulate the polarized assembly of fibronectrin on the surface of the mesoderm during gastrulation. Regulates convergent extension in both dorsal mesoderm and neural tissue without affecting cell fate. Regulates neural fold closure during neurulation. May be required for cell surface localization of fzd3 and fzd6 in the inner ear. The chain is Vang-like protein 2 from Xenopus tropicalis (Western clawed frog).